Here is a 958-residue protein sequence, read N- to C-terminus: Importin-13 (958 aa).

HEAT repeat units lie at residues 19–49 (ENVE…QAQV), 51–83 (PQAW…RSPA), 90–130 (PDQY…LSMM), 137–174 (AVAD…EFQT), 189–226 (LAQE…SWVQ), 231–263 (LMDC…NAIS), 271–320 (VNTL…ALLD), 325–367 (WQSF…DDIL), 370–433 (EPDK…YEML), 435–471 (AELL…FQSI), 482–517 (VVPG…WLAD), 519–553 (PVMI…CREC), 557–595 (LPPY…LLSA), 598–643 (VEEI…SNLF), 671–711 (PVVV…VKTL), 715–749 (FAPM…VHIF), 756–798 (FPPI…ALKR), 810–840 (VKAL…TELL), 855–888 (ENGK…FALN), and 892–926 (FSYL…QQIL). The region spanning 40–106 (AQKWLMQAQV…KSQLFTHITR (67 aa)) is the Importin N-terminal domain.

It belongs to the importin beta family.

The protein localises to the cytoplasm. It localises to the nucleus. Its function is as follows. Functions in nuclear protein import as nuclear transport receptor. Serves as receptor for nuclear localization signals (NLS) in cargo substrates. Is thought to mediate docking of the importin/substrate complex to the nuclear pore complex (NPC) through binding to nucleoporin and the complex is subsequently translocated through the pore by an energy requiring, Ran-dependent mechanism. At the nucleoplasmic side of the NPC, Ran binds to the importin, the importin/substrate complex dissociates and importin is re-exported from the nucleus to the cytoplasm where GTP hydrolysis releases Ran. The directionality of nuclear import is thought to be conferred by an asymmetric distribution of the GTP- and GDP-bound forms of Ran between the cytoplasm and nucleus. In Gallus gallus (Chicken), this protein is Importin-13 (IPO13).